The primary structure comprises 428 residues: Enolase (428 aa).

Gln-163 lines the (2R)-2-phosphoglycerate pocket. The active-site Proton donor is Glu-205. Mg(2+) is bound by residues Asp-242, Glu-285, and Asp-311. 4 residues coordinate (2R)-2-phosphoglycerate: Lys-336, Arg-365, Ser-366, and Lys-387. The active-site Proton acceptor is the Lys-336.

It belongs to the enolase family. It depends on Mg(2+) as a cofactor.

Its subcellular location is the cytoplasm. It localises to the secreted. It is found in the cell surface. The enzyme catalyses (2R)-2-phosphoglycerate = phosphoenolpyruvate + H2O. It functions in the pathway carbohydrate degradation; glycolysis; pyruvate from D-glyceraldehyde 3-phosphate: step 4/5. Its function is as follows. Catalyzes the reversible conversion of 2-phosphoglycerate (2-PG) into phosphoenolpyruvate (PEP). It is essential for the degradation of carbohydrates via glycolysis. This chain is Enolase, found in Desulfatibacillum aliphaticivorans.